The primary structure comprises 60 residues: MAVPKRRTSKRRKRARNTHKVAPAIVIQSCPQCSAAKRPHRVCAECGYYAGEQRVAAQEA.

The segment covering 1–19 has biased composition (basic residues); that stretch reads MAVPKRRTSKRRKRARNTH. The interval 1 to 20 is disordered; sequence MAVPKRRTSKRRKRARNTHK.

It belongs to the bacterial ribosomal protein bL32 family.

The chain is Large ribosomal subunit protein bL32 from Gemmatimonas aurantiaca (strain DSM 14586 / JCM 11422 / NBRC 100505 / T-27).